A 363-amino-acid polypeptide reads, in one-letter code: Ribosomal RNA large subunit methyltransferase M (363 aa).

S-adenosyl-L-methionine contacts are provided by residues Ser194, Cys227–Gly230, Asp246, Asp266, and Asp284. The active-site Proton acceptor is the Lys313.

This sequence belongs to the class I-like SAM-binding methyltransferase superfamily. RNA methyltransferase RlmE family. RlmM subfamily. As to quaternary structure, monomer.

The protein resides in the cytoplasm. It catalyses the reaction cytidine(2498) in 23S rRNA + S-adenosyl-L-methionine = 2'-O-methylcytidine(2498) in 23S rRNA + S-adenosyl-L-homocysteine + H(+). Catalyzes the 2'-O-methylation at nucleotide C2498 in 23S rRNA. The chain is Ribosomal RNA large subunit methyltransferase M from Haemophilus influenzae (strain 86-028NP).